Consider the following 180-residue polypeptide: Ribulose bisphosphate carboxylase small subunit, chloroplastic 2 (180 aa).

Residues 1 to 56 (MASMISSSAVTTVSRASRGQSAAVAPFGGLKSMTGFPVKKVNTDITSITSNGGRVK) constitute a chloroplast transit peptide.

The protein belongs to the RuBisCO small chain family. In terms of assembly, heterohexadecamer of 8 large and 8 small subunits.

It localises to the plastid. Its subcellular location is the chloroplast. In terms of biological role, ruBisCO catalyzes two reactions: the carboxylation of D-ribulose 1,5-bisphosphate, the primary event in carbon dioxide fixation, as well as the oxidative fragmentation of the pentose substrate. Both reactions occur simultaneously and in competition at the same active site. Although the small subunit is not catalytic it is essential for maximal activity. This chain is Ribulose bisphosphate carboxylase small subunit, chloroplastic 2, found in Pisum sativum (Garden pea).